The primary structure comprises 729 residues: Transketolase (729 aa).

Substrate is bound at residue His-97. Thiamine diphosphate-binding positions include His-138 and 186–188; that span reads GPL. Position 227 (Asp-227) interacts with Mg(2+). 2 residues coordinate thiamine diphosphate: Gly-228 and Asn-257. Residues Asn-257 and Ile-259 each contribute to the Mg(2+) site. Substrate-binding residues include His-332, Arg-423, and Ser-450. Residue His-332 coordinates thiamine diphosphate. The active-site Proton donor is the Glu-477. Phe-503 contributes to the thiamine diphosphate binding site. The substrate site is built by His-527, Asp-535, and Arg-586.

Belongs to the transketolase family. In terms of assembly, homodimer. Mg(2+) is required as a cofactor. Ca(2+) serves as cofactor. Requires Mn(2+) as cofactor. The cofactor is Co(2+). It depends on thiamine diphosphate as a cofactor.

It catalyses the reaction D-sedoheptulose 7-phosphate + D-glyceraldehyde 3-phosphate = aldehydo-D-ribose 5-phosphate + D-xylulose 5-phosphate. Functionally, catalyzes the transfer of a two-carbon ketol group from a ketose donor to an aldose acceptor, via a covalent intermediate with the cofactor thiamine pyrophosphate. This Streptococcus pyogenes serotype M18 (strain MGAS8232) protein is Transketolase (tkt).